A 218-amino-acid chain; its full sequence is Adenylate kinase (218 aa).

10-15 (GAGKGT) contacts ATP. An NMP region spans residues 30 to 59 (STGDMFRAAMADQTDLGVKAKAFIDKGELV). AMP contacts are provided by residues Thr31, Arg36, 57–59 (ELV), 85–88 (GFPR), and Gln92. The interval 126-164 (GRFICKTCGATYHKLYHPTQVEGTCDRCGGHVFFQREDD) is LID. Residue Arg127 participates in ATP binding. Zn(2+) contacts are provided by Cys130 and Cys133. 136–137 (TY) lines the ATP pocket. Zn(2+) contacts are provided by Cys150 and Cys153. AMP is bound by residues Arg161 and Arg172. Gln200 serves as a coordination point for ATP.

Belongs to the adenylate kinase family. Monomer.

Its subcellular location is the cytoplasm. It catalyses the reaction AMP + ATP = 2 ADP. Its pathway is purine metabolism; AMP biosynthesis via salvage pathway; AMP from ADP: step 1/1. Catalyzes the reversible transfer of the terminal phosphate group between ATP and AMP. Plays an important role in cellular energy homeostasis and in adenine nucleotide metabolism. The sequence is that of Adenylate kinase from Latilactobacillus sakei subsp. sakei (strain 23K) (Lactobacillus sakei subsp. sakei).